The following is a 168-amino-acid chain: INO80 complex subunit 3 (168 aa).

The span at 115–129 shows a compositional bias: polar residues; the sequence is TNSTLSTPKSFHSPL. The interval 115-168 is disordered; sequence TNSTLSTPKSFHSPLQSRGISPSSAQSSAAVSSSRKQKRKRTSEGPSERRARKK. Positions 130–148 are enriched in low complexity; sequence QSRGISPSSAQSSAAVSSS. Over residues 156-168 the composition is skewed to basic and acidic residues; it reads TSEGPSERRARKK.

In terms of assembly, component of the INO80 chromatin remodeling complex.

The protein resides in the nucleus. Functionally, component of the INO80 complex which remodels chromatin by shifting nucleosomes and is involved in DNA repair. The chain is INO80 complex subunit 3 (iec3) from Schizosaccharomyces pombe (strain 972 / ATCC 24843) (Fission yeast).